Consider the following 406-residue polypeptide: Argininosuccinate synthase (406 aa).

ATP contacts are provided by residues 11 to 19 and Ala38; that span reads AYSGGLDTS. L-citrulline contacts are provided by Tyr91 and Ser96. Gly121 contacts ATP. The L-aspartate site is built by Thr123, Asn127, and Asp128. Residue Asn127 participates in L-citrulline binding. L-citrulline contacts are provided by Arg131, Ser182, Ser191, Glu267, and Tyr279.

This sequence belongs to the argininosuccinate synthase family. Type 1 subfamily. Homotetramer.

It is found in the cytoplasm. The enzyme catalyses L-citrulline + L-aspartate + ATP = 2-(N(omega)-L-arginino)succinate + AMP + diphosphate + H(+). It functions in the pathway amino-acid biosynthesis; L-arginine biosynthesis; L-arginine from L-ornithine and carbamoyl phosphate: step 2/3. The protein is Argininosuccinate synthase of Rhodospirillum centenum (strain ATCC 51521 / SW).